The sequence spans 328 residues: DNA-directed RNA polymerase subunit alpha (328 aa).

Residues M1–D230 are alpha N-terminal domain (alpha-NTD). The segment at N243–S328 is alpha C-terminal domain (alpha-CTD).

The protein belongs to the RNA polymerase alpha chain family. As to quaternary structure, homodimer. The RNAP catalytic core consists of 2 alpha, 1 beta, 1 beta' and 1 omega subunit. When a sigma factor is associated with the core the holoenzyme is formed, which can initiate transcription.

The enzyme catalyses RNA(n) + a ribonucleoside 5'-triphosphate = RNA(n+1) + diphosphate. DNA-dependent RNA polymerase catalyzes the transcription of DNA into RNA using the four ribonucleoside triphosphates as substrates. The chain is DNA-directed RNA polymerase subunit alpha from Nitratiruptor sp. (strain SB155-2).